The chain runs to 412 residues: Putative competence-damage inducible protein (412 aa).

This sequence belongs to the CinA family.

The polypeptide is Putative competence-damage inducible protein (Bacillus cereus (strain G9842)).